We begin with the raw amino-acid sequence, 69 residues long: Putative membrane protein insertion efficiency factor (69 aa).

The protein belongs to the UPF0161 family.

It localises to the cell inner membrane. Functionally, could be involved in insertion of integral membrane proteins into the membrane. The polypeptide is Putative membrane protein insertion efficiency factor (Dechloromonas aromatica (strain RCB)).